Here is a 217-residue protein sequence, read N- to C-terminus: Segregation and condensation protein B (217 aa).

This sequence belongs to the ScpB family. Homodimer. Homodimerization may be required to stabilize the binding of ScpA to the Smc head domains. Component of a cohesin-like complex composed of ScpA, ScpB and the Smc homodimer, in which ScpA and ScpB bind to the head domain of Smc. The presence of the three proteins is required for the association of the complex with DNA.

Its subcellular location is the cytoplasm. Functionally, participates in chromosomal partition during cell division. May act via the formation of a condensin-like complex containing Smc and ScpA that pull DNA away from mid-cell into both cell halves. The sequence is that of Segregation and condensation protein B from Geobacillus kaustophilus (strain HTA426).